The sequence spans 387 residues: Alkanesulfonate monooxygenase (387 aa).

The protein belongs to the SsuD family.

The enzyme catalyses an alkanesulfonate + FMNH2 + O2 = an aldehyde + FMN + sulfite + H2O + 2 H(+). Functionally, catalyzes the desulfonation of aliphatic sulfonates. The protein is Alkanesulfonate monooxygenase of Xanthomonas axonopodis pv. citri (strain 306).